The following is a 119-amino-acid chain: Ribonuclease P protein component (119 aa).

It belongs to the RnpA family. As to quaternary structure, consists of a catalytic RNA component (M1 or rnpB) and a protein subunit.

The enzyme catalyses Endonucleolytic cleavage of RNA, removing 5'-extranucleotides from tRNA precursor.. Functionally, RNaseP catalyzes the removal of the 5'-leader sequence from pre-tRNA to produce the mature 5'-terminus. It can also cleave other RNA substrates such as 4.5S RNA. The protein component plays an auxiliary but essential role in vivo by binding to the 5'-leader sequence and broadening the substrate specificity of the ribozyme. The polypeptide is Ribonuclease P protein component (Clostridium acetobutylicum (strain ATCC 824 / DSM 792 / JCM 1419 / IAM 19013 / LMG 5710 / NBRC 13948 / NRRL B-527 / VKM B-1787 / 2291 / W)).